The sequence spans 128 residues: Translation initiation factor 5A (128 aa).

At Lys35 the chain carries Hypusine.

It belongs to the eIF-5A family.

The protein localises to the cytoplasm. Functionally, functions by promoting the formation of the first peptide bond. The chain is Translation initiation factor 5A (eIF5A) from Methanocella arvoryzae (strain DSM 22066 / NBRC 105507 / MRE50).